Consider the following 175-residue polypeptide: Cuticle protein 16.5, isoform B (175 aa).

A run of 19 repeats spans residues 17–20 (AAPA), 25–28 (AAPA), 31–34 (AAPA), 38–41 (AAPA), 44–47 (AAPA), 51–54 (AAPA), 57–60 (AAPA), 64–67 (AAPA), 70–73 (AAPA), 77–80 (AAPA), 83–86 (AAPA), 91–94 (AAPA), 99–102 (AAPA), 106–109 (AAPA), 134–137 (AAPA), 144–147 (AAPA), 151–154 (AAPA), 158–161 (AAPA), and 165–168 (AAPA).

Functionally, component of the cuticle of migratory locust which contains more than 100 different structural proteins. In Locusta migratoria (Migratory locust), this protein is Cuticle protein 16.5, isoform B.